We begin with the raw amino-acid sequence, 1435 residues long: MLMSLTNEQQERFQILLQQLQIPDDLINQYLQGGGIERLVIDKANKSWHFDLQVPRILPTELYELLETKLKQSFSHIARTTFALETENKQFTEEEVRAYWPLCTERITFSPMFAYLKKQLPQVNGVKLLINVNNELESTALKKNVAKPVGDQYEVFGFPRFQLDTHIQQNTEEMQKFREQTQQEDRERVIQAMEEMAKKQAEESSVVYEGPITLGYLIKPDEEITPMREIQDEERRKTVQGYVFHVETKELRSGRTLLTLKITDYTDSIMIKMFSRDKEDIPMLQSLKKGMWVKARGSVQNDTFVRDLVMIANDINEITGPSRKDKAPEGEKRVELHLHTPMSQMDAVTPVSKLVAQAGKWGHEAIAVTDHAVAQSFPEAYSAGKKAGVKVIYGVEANLVNDGVPIAYNEAHRLLAEETYVVFDVETTGLSAVYDTVIELAAVKVKGGEIIDRFESFANPHQPLSATIIELTGITDDMLTDAPEVDEVFKKFEEWMGDHTLVAHNASFDMGFINVGFKKAGLEKTNNPVIDTLELARFLFPEMKNHRLNTMCKKLDIELTQHHRAIYDTEATGYLLVKMLKDVIEKGFEYHDQLNDSMGQGDAYKRGRPSHMTLLATSDVGLKNLYKLVSYSHLNYFYRVPRVPRSLLKKYREGILVGTACDKGEVFEAMMQKAPEEVEEIAQFYDYIEVMPPEVLRHLVERELVRDEGQLKTIISNLVKLGETLDKPVVATGNVHYLDPEDAMYRKILVSSQGGANPLNRHSLPPVHFRTTDEMLECFSFLGEDKAKEVVVTNTQKIASLIGDVHPVKDDLYTPKIEGADDETRDMSYKMARSIYGEELPEIVEARLEKELKSIIGHGFAVIYLISHKLVKKSLVDGYLVGSRGSVGSSFVATMMEITEVNPLPPHYVCPKCKQSEFFNDGSVGSGFDLPDKECPACNIPYVKDGHDIPFETFLGFKGDKVPDIDLNFSGEYQPRAHNYTKVLFGEDYVYRAGTIGTVAEKTAYGYVKGYANDHNLTIRNAEIDRLVAGCTGVKRTTGQHPGGIIVVPDYMDIFDFSPIQYPADSIGAEWRTTHFDFHSIHDNLLKLDILGHDDPTVIRMLQDLSGIDPKTIPTDDPEVMKIFSGPESLGVTEEQINCKTGTLGIPEFGTKFVRQMLEETKPTTFSELVQISGLSHGTDVWLGNANELIYNGTCTLSEVIGCRDDIMVYLIYQGLDPSLAFKIMESVRKGKGVPEEWEEDMKNNNVPGWYIDSCKKIKYMFPKAHAAAYVLMAVRIAYFKVHFALLFYAAYFTVRADDFDVEAMAKGSASIRARIDEIAQKGLDAAPKEKSLLTVLEMTLEMCERGYSFQKVDLYRSHATEFIIDGDTLIPPFNAVPGLGTNAALSIVEARKNGDFLSKEDLQQRSKVSKTIIEYLDSQGCLGDLPDQNQLSLF.

Positions 420–576 (YVVFDVETTG…YDTEATGYLL (157 aa)) constitute an Exonuclease domain.

It belongs to the DNA polymerase type-C family. PolC subfamily.

The protein localises to the cytoplasm. It carries out the reaction DNA(n) + a 2'-deoxyribonucleoside 5'-triphosphate = DNA(n+1) + diphosphate. In terms of biological role, required for replicative DNA synthesis. This DNA polymerase also exhibits 3' to 5' exonuclease activity. This chain is DNA polymerase III PolC-type, found in Bacillus cereus (strain ATCC 14579 / DSM 31 / CCUG 7414 / JCM 2152 / NBRC 15305 / NCIMB 9373 / NCTC 2599 / NRRL B-3711).